The following is a 579-amino-acid chain: Adenine deaminase (579 aa).

Belongs to the metallo-dependent hydrolases superfamily. Adenine deaminase family. Mn(2+) serves as cofactor.

The enzyme catalyses adenine + H2O + H(+) = hypoxanthine + NH4(+). In Listeria innocua serovar 6a (strain ATCC BAA-680 / CLIP 11262), this protein is Adenine deaminase.